The following is a 358-amino-acid chain: Pre-mRNA-splicing factor spp2 (358 aa).

2 disordered regions span residues 1-250 (MTDQ…RAVP) and 298-358 (AWNQ…RGDR). Residues 24 to 40 (KTKKPSRPTHTRRHHAR) show a composition bias toward basic residues. Basic and acidic residues-rich tracts occupy residues 80–137 (LENR…DASR) and 145–160 (RSRDRDHKPKDPKDLQ). Positions 174-185 (NPKSTTTATSSF) are enriched in polar residues. Basic and acidic residues-rich tracts occupy residues 233–246 (SSHDRDRSPDHSDY) and 309–358 (GDSR…RGDR).

The protein belongs to the SPP2 family. Associated with the spliceosome.

The protein localises to the nucleus. Involved in spliceosome maturation and the first step of pre-mRNA splicing. This is Pre-mRNA-splicing factor spp2 (msp-40) from Neurospora crassa (strain ATCC 24698 / 74-OR23-1A / CBS 708.71 / DSM 1257 / FGSC 987).